A 198-amino-acid polypeptide reads, in one-letter code: KinB-signaling pathway activation protein (198 aa).

The next 6 helical transmembrane spans lie at 9-29 (FFFSILAVGALITSIVGFALK), 42-62 (AGQIFSVLFWFIGVGMIFSVI), 90-110 (LQLFFILFVAFDLMYVRFLFF), 117-137 (LAGYAWLPVFLLIFGVITAYI), 146-166 (TFVSSLFLMVVITALEWFPAL), and 173-193 (WLYLMLFPLMACNAFQLLMLP).

It localises to the cell membrane. Involved in the activation of the KinB signaling pathway of sporulation. The sequence is that of KinB-signaling pathway activation protein (kbaA) from Bacillus subtilis (strain 168).